The chain runs to 378 residues: Alcohol dehydrogenase (378 aa).

Fe cation is bound by residues Asp-195, His-199, His-262, and His-274.

The protein belongs to the iron-containing alcohol dehydrogenase family. Fe(2+) is required as a cofactor. Requires Mn(2+) as cofactor.

The catalysed reaction is a primary alcohol + NAD(+) = an aldehyde + NADH + H(+). It catalyses the reaction butan-1-ol + NAD(+) = butanal + NADH + H(+). It carries out the reaction hexan-1-ol + NAD(+) = hexanal + NADH + H(+). The enzyme catalyses ethanol + NAD(+) = acetaldehyde + NADH + H(+). Its function is as follows. Thermostable type III alcohol dehydrogenase. For oxidation activity, the best substrates are 1-butanol and 1-hexanol, followed by ethanol. Shows lower activity with ethylene glycol, isopentanol, isopropanol and glycerol. Displays higher reduction activity in the presence of butanal, followed by acetaldehyde. Has lower activity with hexanal and acetone. This chain is Alcohol dehydrogenase, found in Thermococcus barophilus.